Consider the following 49-residue polypeptide: Large ribosomal subunit protein bL33A (49 aa).

Belongs to the bacterial ribosomal protein bL33 family.

In Lactobacillus delbrueckii subsp. bulgaricus (strain ATCC 11842 / DSM 20081 / BCRC 10696 / JCM 1002 / NBRC 13953 / NCIMB 11778 / NCTC 12712 / WDCM 00102 / Lb 14), this protein is Large ribosomal subunit protein bL33A.